The chain runs to 588 residues: MKSTQTPSGMPIHKYRPFHEQIAVDLPDRTWPARRITEAPRWCAVDLRDGNQALIDPMSPERKRIMFDLLVRMGYKEIEVGFPSASQTDFDFVRSLIEEGAIPDDVTIQVLTQAREHLIARTYESLRGAKQAIVHLYNSTSVLQREVVFRTDKQGIIDIALEGARLCKRYEETIPEVDVYYEYSPESYTGTELEFAAEICNRVVEVLEPTPERKVILNLPATVEMATPNVYADSIEWMCRHLDRRDEVIVSLHPHNDRGTAVAAAELGYLAGADRIEGCLFGNGERTGNVDLVALGINLFTQGIDPQIDFSDLDGIKRTAEHCNQLAVPERSPWAGDLVYTAFSGSHQDAIKKGFEAMAADAAAQGVTVDEIPWAVPYLPVDPQDLGRSYEAVIRVNSQSGKGGVAYLLKADHSLDLPRRLQIEFSGVVQAKTDAEGGEIPSAQIWSIFQDEYLPAPLDRVEEKWGRFELTSTRTSSDMGGSVSLEVELRDGDRVREASASGNGPIAAFLKVLADQGVDVRLLDYVEHALSASGDALAASYVELEVEGVRLWGVGIDEDSSTASLEAIVSGVNRAIRRTVREPELAAV.

Residues 40-314 (PRWCAVDLRD…DPQIDFSDLD (275 aa)) form the Pyruvate carboxyltransferase domain. Residues D49, H253, H255, and N289 each coordinate Mg(2+). The interval 456 to 588 (APLDRVEEKW…TVREPELAAV (133 aa)) is regulatory domain.

It belongs to the alpha-IPM synthase/homocitrate synthase family. LeuA type 2 subfamily. In terms of assembly, homodimer. It depends on Mg(2+) as a cofactor.

It is found in the cytoplasm. The catalysed reaction is 3-methyl-2-oxobutanoate + acetyl-CoA + H2O = (2S)-2-isopropylmalate + CoA + H(+). It participates in amino-acid biosynthesis; L-leucine biosynthesis; L-leucine from 3-methyl-2-oxobutanoate: step 1/4. Functionally, catalyzes the condensation of the acetyl group of acetyl-CoA with 3-methyl-2-oxobutanoate (2-ketoisovalerate) to form 3-carboxy-3-hydroxy-4-methylpentanoate (2-isopropylmalate). This is 2-isopropylmalate synthase from Clavibacter michiganensis subsp. michiganensis (strain NCPPB 382).